A 962-amino-acid polypeptide reads, in one-letter code: AP2-associated protein kinase 1 (962 aa).

Methionine 1 bears the N-acetylmethionine mark. Positions methionine 1–glutamine 11 are enriched in basic and acidic residues. A disordered region spans residues methionine 1 to serine 27. Serine 14 is modified (phosphoserine). A compositionally biased stretch (gly residues) spans serine 14–serine 27. A Protein kinase domain is found at valine 46–leucine 314. ATP-binding positions include leucine 52–valine 60 and lysine 74. Catalysis depends on aspartate 176, which acts as the Proton acceptor. Tyrosine 234 is modified (phosphotyrosine). Serine 235 is subject to Phosphoserine. Disordered regions lie at residues asparagine 325–alanine 515 and proline 576–histidine 633. Threonine 353 and threonine 388 each carry phosphothreonine. An Omega-N-methylarginine modification is found at arginine 390. Residues proline 397–lysine 418 are compositionally biased toward polar residues. Over residues alanine 419 to glutamine 434 the composition is skewed to low complexity. A compositionally biased stretch (pro residues) spans proline 435–threonine 444. At threonine 440 the chain carries Phosphothreonine. Low complexity-rich tracts occupy residues proline 445 to glutamine 485, glutamine 498 to glutamine 514, and proline 576 to threonine 606. Threonine 607 bears the Phosphothreonine mark. The span at glycine 614–threonine 628 shows a compositional bias: polar residues. Serine 619 is subject to Phosphoserine. At threonine 621 the chain carries Phosphothreonine. Phosphoserine occurs at positions 624, 625, 638, and 651. Threonine 654 carries the post-translational modification Phosphothreonine. Low complexity predominate over residues alanine 664–serine 677. A disordered region spans residues alanine 664–aspartate 702. Polar residues predominate over residues glycine 678–asparagine 697. A phosphoserine mark is found at serine 732, serine 847, serine 938, and serine 939. The segment at glutamate 824–aspartate 961 is clathrin-binding domain (CBD). 2 disordered regions span residues proline 839 to leucine 860 and leucine 925 to leucine 946. Polar residues predominate over residues proline 846–leucine 860. A compositionally biased stretch (low complexity) spans glycine 932 to serine 945.

Belongs to the protein kinase superfamily. Ser/Thr protein kinase family. As to quaternary structure, interacts (via CBD domain) with clathrin. Interacts with AP-2 complex. Interacts with NUMB. Interacts with alpha-adaptin. Interacts with EPS15. Interacts with membrane-bound activated NOTCH1 but not with the inactive full-length form of NOTCH1. Preferentially interacts with monoubiquitinated activated NOTCH1 compared to the non-ubiquitinated form. Autophosphorylated.

Its subcellular location is the cell membrane. The protein resides in the membrane. It localises to the clathrin-coated pit. The protein localises to the presynapse. It carries out the reaction L-seryl-[protein] + ATP = O-phospho-L-seryl-[protein] + ADP + H(+). The catalysed reaction is L-threonyl-[protein] + ATP = O-phospho-L-threonyl-[protein] + ADP + H(+). Stimulated by clathrin. Its function is as follows. Regulates clathrin-mediated endocytosis by phosphorylating the AP2M1/mu2 subunit of the adaptor protein complex 2 (AP-2) which ensures high affinity binding of AP-2 to cargo membrane proteins during the initial stages of endocytosis. Preferentially, may phosphorylate substrates on threonine residues. Regulates phosphorylation of other AP-2 subunits as well as AP-2 localization and AP-2-mediated internalization of ligand complexes. Phosphorylates NUMB and regulates its cellular localization, promoting NUMB localization to endosomes. Binds to and stabilizes the activated form of NOTCH1, increases its localization in endosomes and regulates its transcriptional activity. The chain is AP2-associated protein kinase 1 (Aak1) from Rattus norvegicus (Rat).